The sequence spans 115 residues: Large ribosomal subunit protein bL20 (115 aa).

It belongs to the bacterial ribosomal protein bL20 family.

Functionally, binds directly to 23S ribosomal RNA and is necessary for the in vitro assembly process of the 50S ribosomal subunit. It is not involved in the protein synthesizing functions of that subunit. The protein is Large ribosomal subunit protein bL20 of Borrelia duttonii (strain Ly).